The primary structure comprises 677 residues: Levanase (677 aa).

An N-terminal signal peptide occupies residues 1–24; it reads MKKRLIQVMIMFTLLLTMAFSADA. Substrate-binding positions include 46–49, glutamine 65, tryptophan 73, 105–106, 171–172, glutamate 223, and tryptophan 313; these read WMND, FS, and RD. Aspartate 49 is a catalytic residue.

This sequence belongs to the glycosyl hydrolase 32 family.

It localises to the secreted. The catalysed reaction is Hydrolysis of terminal, non-reducing (2-&gt;1)- and (2-&gt;6)-linked beta-D-fructofuranose residues in fructans.. Its activity is regulated as follows. Is completely inhibited by Ag(+) and Hg(2+) ions. In terms of biological role, exo-fructosidase that can hydrolyze both levan and inulin, leading to the production of free fructose. Is also able to hydrolyze sucrose and to a small extent raffinose, but not melezitose, stachylose, cellobiose, maltose, and lactose. The sequence is that of Levanase (sacC) from Bacillus subtilis (strain 168).